A 661-amino-acid chain; its full sequence is Acetyl-coenzyme A synthetase (661 aa).

CoA is bound by residues 199–202 (RGGK) and T317. ATP is bound by residues 393 to 395 (GEP), 417 to 422 (DTFWQT), D508, and R523. S531 is a CoA binding site. Residue R534 participates in ATP binding. R596 is a binding site for CoA.

The protein belongs to the ATP-dependent AMP-binding enzyme family.

It carries out the reaction acetate + ATP + CoA = acetyl-CoA + AMP + diphosphate. The polypeptide is Acetyl-coenzyme A synthetase (ACS-1) (Coprinopsis cinerea (Inky cap fungus)).